Reading from the N-terminus, the 325-residue chain is Golgi to ER traffic protein 4 homolog B (325 aa).

Disordered regions lie at residues 1–22 (MAAA…GGVQ) and 306–325 (SGED…IELD). Residues 307-317 (GEDDDVEDGQE) show a composition bias toward acidic residues.

It belongs to the GET4 family. Component of the bag6/bat3 complex.

It is found in the cytoplasm. The protein localises to the cytosol. As part of a cytosolic protein quality control complex, the bag6/bat3 complex, maintains misfolded and hydrophobic patches-containing proteins in a soluble state and participates in their proper delivery to the endoplasmic reticulum or alternatively can promote their sorting to the proteasome where they undergo degradation. The bag6/bat3 complex is involved in the post-translational delivery of tail-anchored/type II transmembrane proteins to the endoplasmic reticulum membrane. Similarly, the bag6/bat3 complex also functions as a sorting platform for proteins of the secretory pathway that are mislocalized to the cytosol either delivering them to the proteasome for degradation or to the endoplasmic reticulum. The bag6/bat3 complex also plays a role in the endoplasmic reticulum-associated degradation (ERAD), a quality control mechanism that eliminates unwanted proteins of the endoplasmic reticulum through their retrotranslocation to the cytosol and their targeting to the proteasome. It maintains these retrotranslocated proteins in an unfolded yet soluble state condition in the cytosol to ensure their proper delivery to the proteasome. This chain is Golgi to ER traffic protein 4 homolog B (get4-b), found in Xenopus laevis (African clawed frog).